Here is a 64-residue protein sequence, read N- to C-terminus: Large ribosomal subunit protein bL35 (64 aa).

A compositionally biased stretch (basic residues) spans 1–42 (MPKAKTHSGASKRFRRTGTGKIVRQKANRRHLLEHKSSKRTR). The segment at 1-64 (MPKAKTHSGA…TKRVKSLLNG (64 aa)) is disordered.

This sequence belongs to the bacterial ribosomal protein bL35 family.

This is Large ribosomal subunit protein bL35 from Mycobacterium ulcerans (strain Agy99).